Reading from the N-terminus, the 86-residue chain is Large ribosomal subunit protein bL31B (86 aa).

This sequence belongs to the bacterial ribosomal protein bL31 family. Type B subfamily. In terms of assembly, part of the 50S ribosomal subunit.

The protein is Large ribosomal subunit protein bL31B of Streptococcus equi subsp. equi (strain 4047).